The following is a 160-amino-acid chain: NKEKDENLHEPPSSDDMKSDDESSQKDIKVSSRGRTSTNEDEDLNPEQKIEREKERRMANNARERLRVRDINEAFKELGRMCQLHLKSEKPQTKLLILHQAVAVILSLEQQVRERNLNPKAACLKRREEEKVSVVSAEPPTTLPGTHPGLSETTNPMGHM.

Residues 1-58 (NKEKDENLHEPPSSDDMKSDDESSQKDIKVSSRGRTSTNEDEDLNPEQKIEREKERRM) form a disordered region. The span at 15-30 (DDMKSDDESSQKDIKV) shows a compositional bias: basic and acidic residues. The residue at position 19 (Ser19) is a Phosphoserine. A Glycyl lysine isopeptide (Lys-Gly) (interchain with G-Cter in SUMO2) cross-link involves residue Lys29. Phosphothreonine is present on Thr36. Ser37 carries the phosphoserine modification. The segment covering 46 to 58 (PEQKIEREKERRM) has biased composition (basic and acidic residues). A bHLH domain is found at 55–108 (ERRMANNARERLRVRDINEAFKELGRMCQLHLKSEKPQTKLLILHQAVAVILSL). Residues Lys87 and Lys131 each participate in a glycyl lysine isopeptide (Lys-Gly) (interchain with G-Cter in SUMO2) cross-link. A class A specific domain region spans residues 110–133 (QQVRERNLNPKAACLKRREEEKVS). The disordered stretch occupies residues 132 to 160 (VSVVSAEPPTTLPGTHPGLSETTNPMGHM). Low complexity predominate over residues 139–150 (PPTTLPGTHPGL). Over residues 151–160 (SETTNPMGHM) the composition is skewed to polar residues.

Efficient DNA binding requires dimerization with another bHLH protein. Forms homo- or heterooligomers with myogenin, E12 and ITF2 proteins. Interacts with PTF1A. Interacts with RUNX1T1. Interacts with NEUROD2. Interacts with BHLHA9.

It is found in the nucleus. In terms of biological role, transcriptional regulator. Involved in the initiation of neuronal differentiation. Activates transcription by binding to the E box (5'-CANNTG-3'). May be involved in the functional network that regulates the development of the GnRH axis. The polypeptide is Transcription factor 12 (TCF12) (Papio hamadryas (Hamadryas baboon)).